The chain runs to 83 residues: Probable calcium-binding protein CML28 (83 aa).

EF-hand domains are found at residues 5 to 40 (TEKA…LGSV) and 43 to 75 (EDIK…NRGL). The Ca(2+) site is built by Asp18, Asn20, Asp22, Lys24, Glu29, Asp53, Asp55, Asp57, Tyr59, and Glu64.

Its function is as follows. Potential calcium sensor. This chain is Probable calcium-binding protein CML28 (CML28), found in Arabidopsis thaliana (Mouse-ear cress).